Here is a 294-residue protein sequence, read N- to C-terminus: Ribosomal protein L11 methyltransferase (294 aa).

S-adenosyl-L-methionine is bound by residues T146, G167, D189, and N231.

The protein belongs to the methyltransferase superfamily. PrmA family.

It localises to the cytoplasm. The enzyme catalyses L-lysyl-[protein] + 3 S-adenosyl-L-methionine = N(6),N(6),N(6)-trimethyl-L-lysyl-[protein] + 3 S-adenosyl-L-homocysteine + 3 H(+). In terms of biological role, methylates ribosomal protein L11. The sequence is that of Ribosomal protein L11 methyltransferase from Photobacterium profundum (strain SS9).